The sequence spans 309 residues: GTP cyclohydrolase MptA (309 aa).

The protein belongs to the GTP cyclohydrolase IV family. As to quaternary structure, homodimer. Requires Fe(2+) as cofactor.

The enzyme catalyses GTP + H2O = 7,8-dihydroneopterin 2',3'-cyclic phosphate + formate + diphosphate + H(+). The protein operates within cofactor biosynthesis; 5,6,7,8-tetrahydromethanopterin biosynthesis. In terms of biological role, converts GTP to 7,8-dihydro-D-neopterin 2',3'-cyclic phosphate, the first intermediate in the biosynthesis of coenzyme methanopterin. The polypeptide is GTP cyclohydrolase MptA (Methanococcus aeolicus (strain ATCC BAA-1280 / DSM 17508 / OCM 812 / Nankai-3)).